Here is a 205-residue protein sequence, read N- to C-terminus: MFIVLEGIDGAGKSTQAKLLAEWFENRGYEVVLTKEPTDTPFGKLIRRLVLTGGKEGIIDGAKISHEAEALLFAADRAEHVDKLIKPSLEAGKVVISDRYFYSSLAYQWARGLDLEWLIDLNRFAVKPDIVFLLDLPVKESMNRIRSRKVKSEFDKIFELQRKVRENYLKLAEMFPEMKIINAMEDVETVHNQIIALIETLLGEE.

7–14 (GIDGAGKS) serves as a coordination point for ATP.

The protein belongs to the thymidylate kinase family.

It carries out the reaction dTMP + ATP = dTDP + ADP. This chain is Probable thymidylate kinase, found in Thermococcus kodakarensis (strain ATCC BAA-918 / JCM 12380 / KOD1) (Pyrococcus kodakaraensis (strain KOD1)).